The primary structure comprises 592 residues: Ferric-chelate reductase 1 (592 aa).

Residues 2-22 (AVSGFTLGTCILLLHISYVAN) form a helical membrane-spanning segment. The Reelin domain maps to 13-179 (LLLHISYVAN…FTTPKATVVP (167 aa)). N-linked (GlcNAc...) asparagine glycosylation is found at Asn-138, Asn-308, and Asn-321. A DOMON domain is found at 216 to 331 (EASCVFLSFT…TSYYIFLADG (116 aa)). Residues 335–534 (DGRIYKHSQQ…VGTEVVLEVH (200 aa)) enclose the Cytochrome b561 domain. The chain crosses the membrane as a helical span at residues 372 to 392 (VHGALMFVAWMTTVSIGVLVA). Heme b is bound by residues His-373 and His-414. 2 consecutive transmembrane segments (helical) span residues 415 to 435 (RMLM…PFIY) and 446 to 466 (HPYL…LAVF). His-446 and His-482 together coordinate heme b. 3 consecutive transmembrane segments (helical) span residues 491 to 511 (IIAV…LPDS), 515 to 535 (YAMT…EVHA), and 569 to 589 (AVLA…LSAI).

This sequence belongs to the FRRS1 family. Heme b serves as cofactor.

The protein resides in the membrane. Its function is as follows. Ferric-chelate reductases reduce Fe(3+) to Fe(2+) before its transport from the endosome to the cytoplasm. This Homo sapiens (Human) protein is Ferric-chelate reductase 1 (FRRS1).